The chain runs to 521 residues: Bifunctional purine biosynthesis protein PurH (521 aa).

Positions 1–145 constitute an MGS-like domain; the sequence is MIKQALISVS…KNHRDVTVVV (145 aa).

The protein belongs to the PurH family.

The catalysed reaction is (6R)-10-formyltetrahydrofolate + 5-amino-1-(5-phospho-beta-D-ribosyl)imidazole-4-carboxamide = 5-formamido-1-(5-phospho-D-ribosyl)imidazole-4-carboxamide + (6S)-5,6,7,8-tetrahydrofolate. The enzyme catalyses IMP + H2O = 5-formamido-1-(5-phospho-D-ribosyl)imidazole-4-carboxamide. It participates in purine metabolism; IMP biosynthesis via de novo pathway; 5-formamido-1-(5-phospho-D-ribosyl)imidazole-4-carboxamide from 5-amino-1-(5-phospho-D-ribosyl)imidazole-4-carboxamide (10-formyl THF route): step 1/1. It functions in the pathway purine metabolism; IMP biosynthesis via de novo pathway; IMP from 5-formamido-1-(5-phospho-D-ribosyl)imidazole-4-carboxamide: step 1/1. This is Bifunctional purine biosynthesis protein PurH from Burkholderia thailandensis (strain ATCC 700388 / DSM 13276 / CCUG 48851 / CIP 106301 / E264).